The sequence spans 146 residues: Ribosome-binding factor A (146 aa).

The interval 121–146 (KQQQFGSADDVTENDIDEADDTEGKA) is disordered. Positions 130 to 146 (DVTENDIDEADDTEGKA) are enriched in acidic residues.

Belongs to the RbfA family. Monomer. Binds 30S ribosomal subunits, but not 50S ribosomal subunits or 70S ribosomes.

It localises to the cytoplasm. One of several proteins that assist in the late maturation steps of the functional core of the 30S ribosomal subunit. Associates with free 30S ribosomal subunits (but not with 30S subunits that are part of 70S ribosomes or polysomes). Required for efficient processing of 16S rRNA. May interact with the 5'-terminal helix region of 16S rRNA. In Shewanella sp. (strain MR-4), this protein is Ribosome-binding factor A.